We begin with the raw amino-acid sequence, 406 residues long: MTEEHRLISAESVTEGHPDKVCDQISDAILDDLLVQDPSSHVAVETSAATGVFLVFGEVTSKGYCDVQSKVRETLRNIGYTSSEVGLDADSCGVVVAITEQSAEINQGVARLTGDQETAASREERYEAQGAGDQGVMFGYATDETPTLMPLPIYLAHRLAFRLTEVRKSGEVPHLRPDGKTQVTIEYDDNDKPVRLDTVLISTQHDPEVTQDWLAVELKKHVIDPVLDEVLGSKVPHDNYRQLVNPTGSFILGGPAADAGLTGRKIIVDTYGGAAHHGGGAFSGKDPSKVDRSAAYATRWVAKNIVAAGLAHKVEIQIAYAIGVADPVSVNVETFGTEQGVTRGQIAAAVRKVFDLRPAAIIDELDLKRPIYLKTAAYGHFGRTDVEFPWEKTDKVEELKAAIAAE.

His-17 provides a ligand contact to ATP. A Mg(2+)-binding site is contributed by Asp-19. K(+) is bound at residue Glu-45. L-methionine-binding residues include Glu-58 and Gln-101. The segment at 101–111 is flexible loop; the sequence is QSAEINQGVAR. Residues 178-180, Asp-258, 264-265, Ala-281, and Lys-285 each bind ATP; these read DGK and RK. Residue Asp-258 coordinates L-methionine. Lys-289 serves as a coordination point for L-methionine.

The protein belongs to the AdoMet synthase family. Homotetramer; dimer of dimers. Mg(2+) serves as cofactor. K(+) is required as a cofactor.

It localises to the cytoplasm. It carries out the reaction L-methionine + ATP + H2O = S-adenosyl-L-methionine + phosphate + diphosphate. The protein operates within amino-acid biosynthesis; S-adenosyl-L-methionine biosynthesis; S-adenosyl-L-methionine from L-methionine: step 1/1. Functionally, catalyzes the formation of S-adenosylmethionine (AdoMet) from methionine and ATP. The overall synthetic reaction is composed of two sequential steps, AdoMet formation and the subsequent tripolyphosphate hydrolysis which occurs prior to release of AdoMet from the enzyme. The polypeptide is S-adenosylmethionine synthase (Bifidobacterium longum subsp. infantis (strain ATCC 15697 / DSM 20088 / JCM 1222 / NCTC 11817 / S12)).